Reading from the N-terminus, the 121-residue chain is NAD(P)H-quinone oxidoreductase subunit 3, chloroplastic (121 aa).

3 consecutive transmembrane segments (helical) span residues 10–30, 65–85, and 90–110; these read FFIF…ISKF, MFAL…PWAM, and LGLS…IGLV.

It belongs to the complex I subunit 3 family. NDH is composed of at least 16 different subunits, 5 of which are encoded in the nucleus.

The protein resides in the plastid. It localises to the chloroplast thylakoid membrane. The enzyme catalyses a plastoquinone + NADH + (n+1) H(+)(in) = a plastoquinol + NAD(+) + n H(+)(out). It carries out the reaction a plastoquinone + NADPH + (n+1) H(+)(in) = a plastoquinol + NADP(+) + n H(+)(out). In terms of biological role, NDH shuttles electrons from NAD(P)H:plastoquinone, via FMN and iron-sulfur (Fe-S) centers, to quinones in the photosynthetic chain and possibly in a chloroplast respiratory chain. The immediate electron acceptor for the enzyme in this species is believed to be plastoquinone. Couples the redox reaction to proton translocation, and thus conserves the redox energy in a proton gradient. The chain is NAD(P)H-quinone oxidoreductase subunit 3, chloroplastic from Physcomitrium patens (Spreading-leaved earth moss).